The sequence spans 449 residues: CCA-adding enzyme (449 aa).

Positions 57 and 60 each coordinate ATP. CTP contacts are provided by Ser57 and Arg60. Positions 69, 71, and 124 each coordinate Mg(2+). ATP is bound by residues His147, Lys167, and Tyr176. Residues His147, Lys167, and Tyr176 each coordinate CTP.

Belongs to the tRNA nucleotidyltransferase/poly(A) polymerase family. Archaeal CCA-adding enzyme subfamily. In terms of assembly, homodimer. Mg(2+) serves as cofactor.

It carries out the reaction a tRNA precursor + 2 CTP + ATP = a tRNA with a 3' CCA end + 3 diphosphate. The enzyme catalyses a tRNA with a 3' CCA end + 2 CTP + ATP = a tRNA with a 3' CCACCA end + 3 diphosphate. In terms of biological role, catalyzes the addition and repair of the essential 3'-terminal CCA sequence in tRNAs without using a nucleic acid template. Adds these three nucleotides in the order of C, C, and A to the tRNA nucleotide-73, using CTP and ATP as substrates and producing inorganic pyrophosphate. tRNA 3'-terminal CCA addition is required both for tRNA processing and repair. Also involved in tRNA surveillance by mediating tandem CCA addition to generate a CCACCA at the 3' terminus of unstable tRNAs. While stable tRNAs receive only 3'-terminal CCA, unstable tRNAs are marked with CCACCA and rapidly degraded. This Methanocaldococcus jannaschii (strain ATCC 43067 / DSM 2661 / JAL-1 / JCM 10045 / NBRC 100440) (Methanococcus jannaschii) protein is CCA-adding enzyme.